The chain runs to 388 residues: Probable protein phosphatase 2C 43 (388 aa).

The PPM-type phosphatase domain maps to 53–352 (EFSFAVVQAN…DDITVVVVFI (300 aa)). Mn(2+) is bound by residues Asp84, Gly85, Asp284, and Asp343.

This sequence belongs to the PP2C family. Mg(2+) is required as a cofactor. Requires Mn(2+) as cofactor.

It carries out the reaction O-phospho-L-seryl-[protein] + H2O = L-seryl-[protein] + phosphate. The catalysed reaction is O-phospho-L-threonyl-[protein] + H2O = L-threonyl-[protein] + phosphate. The polypeptide is Probable protein phosphatase 2C 43 (Oryza sativa subsp. japonica (Rice)).